The sequence spans 349 residues: Ferredoxin--NADP reductase 1 (349 aa).

FAD-binding residues include E36, K44, Y48, V88, L123, D290, and S331.

It belongs to the ferredoxin--NADP reductase type 2 family. As to quaternary structure, homodimer. FAD serves as cofactor.

The enzyme catalyses 2 reduced [2Fe-2S]-[ferredoxin] + NADP(+) + H(+) = 2 oxidized [2Fe-2S]-[ferredoxin] + NADPH. In Bacillus cereus (strain ATCC 10987 / NRS 248), this protein is Ferredoxin--NADP reductase 1.